The chain runs to 189 residues: dCTP deaminase, dUMP-forming (189 aa).

Residues K101 to R106, D119, T127 to E129, Q148, Y162, and Q174 each bind dCTP. E129 acts as the Proton donor/acceptor in catalysis.

This sequence belongs to the dCTP deaminase family. As to quaternary structure, homotrimer.

The catalysed reaction is dCTP + 2 H2O = dUMP + NH4(+) + diphosphate. It participates in pyrimidine metabolism; dUMP biosynthesis; dUMP from dCTP: step 1/1. Functionally, bifunctional enzyme that catalyzes both the deamination of dCTP to dUTP and the hydrolysis of dUTP to dUMP without releasing the toxic dUTP intermediate. This is dCTP deaminase, dUMP-forming from Rhodococcus opacus (strain B4).